The primary structure comprises 255 residues: Leucyl/phenylalanyl-tRNA--protein transferase (255 aa).

This sequence belongs to the L/F-transferase family.

Its subcellular location is the cytoplasm. The enzyme catalyses N-terminal L-lysyl-[protein] + L-leucyl-tRNA(Leu) = N-terminal L-leucyl-L-lysyl-[protein] + tRNA(Leu) + H(+). It carries out the reaction N-terminal L-arginyl-[protein] + L-leucyl-tRNA(Leu) = N-terminal L-leucyl-L-arginyl-[protein] + tRNA(Leu) + H(+). It catalyses the reaction L-phenylalanyl-tRNA(Phe) + an N-terminal L-alpha-aminoacyl-[protein] = an N-terminal L-phenylalanyl-L-alpha-aminoacyl-[protein] + tRNA(Phe). Functions in the N-end rule pathway of protein degradation where it conjugates Leu, Phe and, less efficiently, Met from aminoacyl-tRNAs to the N-termini of proteins containing an N-terminal arginine or lysine. This is Leucyl/phenylalanyl-tRNA--protein transferase from Burkholderia pseudomallei (strain 668).